The chain runs to 222 residues: Leucyl/phenylalanyl-tRNA--protein transferase (222 aa).

It belongs to the L/F-transferase family.

It is found in the cytoplasm. It catalyses the reaction N-terminal L-lysyl-[protein] + L-leucyl-tRNA(Leu) = N-terminal L-leucyl-L-lysyl-[protein] + tRNA(Leu) + H(+). It carries out the reaction N-terminal L-arginyl-[protein] + L-leucyl-tRNA(Leu) = N-terminal L-leucyl-L-arginyl-[protein] + tRNA(Leu) + H(+). The catalysed reaction is L-phenylalanyl-tRNA(Phe) + an N-terminal L-alpha-aminoacyl-[protein] = an N-terminal L-phenylalanyl-L-alpha-aminoacyl-[protein] + tRNA(Phe). Functions in the N-end rule pathway of protein degradation where it conjugates Leu, Phe and, less efficiently, Met from aminoacyl-tRNAs to the N-termini of proteins containing an N-terminal arginine or lysine. This chain is Leucyl/phenylalanyl-tRNA--protein transferase, found in Legionella pneumophila (strain Lens).